The chain runs to 63 residues: Bowman-birk type proteinase inhibitor 2 (63 aa).

7 disulfides stabilise this stretch: cysteine 7-cysteine 61, cysteine 8-cysteine 23, cysteine 11-cysteine 57, cysteine 13-cysteine 21, cysteine 31-cysteine 38, cysteine 35-cysteine 50, and cysteine 40-cysteine 48.

Belongs to the Bowman-Birk serine protease inhibitor family. In terms of assembly, exists as a dimer in its native form.

Functionally, inhibits trypsin, chymotrypsin, plasmin and factor XIIa. Does not inhibit factor Xa, thrombin, human plasma kallikrein, porcine pancreatic kallikrein and human urinary kallikrein. This Amburana cearensis (Cerejeira) protein is Bowman-birk type proteinase inhibitor 2.